A 585-amino-acid chain; its full sequence is Eukaryotic translation initiation factor 3 subunit D (585 aa).

Basic and acidic residues predominate over residues 43-60 (LGRMADWTGDGKDRDRGG). 2 disordered regions span residues 43-62 (LGRM…GGRQ) and 109-152 (RGGG…NRSA). Residues 109–130 (RGGGTVFRGRGQRGVGQRGGRA) are compositionally biased toward gly residues. Residues 300–314 (SIDLVTVNENAADAP) form an RNA gate region. The tract at residues 560–585 (VPPNTFEEDDEAAEEQEEKAEEESEE) is disordered. The span at 565 to 585 (FEEDDEAAEEQEEKAEEESEE) shows a compositional bias: acidic residues.

Belongs to the eIF-3 subunit D family. In terms of assembly, component of the eukaryotic translation initiation factor 3 (eIF-3) complex.

The protein resides in the cytoplasm. Functionally, mRNA cap-binding component of the eukaryotic translation initiation factor 3 (eIF-3) complex, which is involved in protein synthesis of a specialized repertoire of mRNAs and, together with other initiation factors, stimulates binding of mRNA and methionyl-tRNAi to the 40S ribosome. The eIF-3 complex specifically targets and initiates translation of a subset of mRNAs involved in cell proliferation. In the eIF-3 complex, eif3d specifically recognizes and binds the 7-methylguanosine cap of a subset of mRNAs. This Neosartorya fischeri (strain ATCC 1020 / DSM 3700 / CBS 544.65 / FGSC A1164 / JCM 1740 / NRRL 181 / WB 181) (Aspergillus fischerianus) protein is Eukaryotic translation initiation factor 3 subunit D.